The chain runs to 403 residues: S-adenosylmethionine synthase (403 aa).

ATP is bound at residue His-17. Asp-19 provides a ligand contact to Mg(2+). A K(+)-binding site is contributed by Glu-45. Residues Glu-58 and Gln-104 each contribute to the L-methionine site. The tract at residues 104–114 (QSPDIAQGVDT) is flexible loop. Residues 179–181 (DGK), 250–251 (KF), Asp-259, 265–266 (RK), Ala-282, and Lys-286 contribute to the ATP site. L-methionine is bound at residue Asp-259. Residue Lys-290 coordinates L-methionine.

This sequence belongs to the AdoMet synthase family. Homotetramer; dimer of dimers. Requires Mg(2+) as cofactor. It depends on K(+) as a cofactor.

It is found in the cytoplasm. It carries out the reaction L-methionine + ATP + H2O = S-adenosyl-L-methionine + phosphate + diphosphate. It participates in amino-acid biosynthesis; S-adenosyl-L-methionine biosynthesis; S-adenosyl-L-methionine from L-methionine: step 1/1. In terms of biological role, catalyzes the formation of S-adenosylmethionine (AdoMet) from methionine and ATP. The overall synthetic reaction is composed of two sequential steps, AdoMet formation and the subsequent tripolyphosphate hydrolysis which occurs prior to release of AdoMet from the enzyme. The sequence is that of S-adenosylmethionine synthase from Mycobacterium avium (strain 104).